Consider the following 275-residue polypeptide: 3-oxo-isoapionate decarboxylase (275 aa).

It carries out the reaction 3-oxoisoapionate + H(+) = L-erythrulose + CO2. It participates in carbohydrate metabolism. Functionally, involved in catabolism of D-apiose. Catalyzes decarboxylation of 3-oxo-isoapionate to L-erythrulose. The sequence is that of 3-oxo-isoapionate decarboxylase from Pectobacterium atrosepticum (strain SCRI 1043 / ATCC BAA-672) (Erwinia carotovora subsp. atroseptica).